A 343-amino-acid polypeptide reads, in one-letter code: Galactoside alpha-(1,2)-fucosyltransferase 2 (343 aa).

Residues 1–14 lie on the Cytoplasmic side of the membrane; the sequence is MLVVQMPFSFPVAH. Residues 15–28 traverse the membrane as a helical; Signal-anchor for type II membrane protein segment; that stretch reads FILFVFTVSTIFHI. At 29 to 343 the chain is on the lumenal side; the sequence is QQRLAKIQAM…AADLSPLLKH (315 aa). N-linked (GlcNAc...) asparagine glycans are attached at residues Asn188, Asn282, and Asn308.

It belongs to the glycosyltransferase 11 family.

The protein localises to the golgi apparatus. The protein resides in the golgi stack membrane. It catalyses the reaction a beta-D-galactosyl-(1-&gt;3)-N-acetyl-beta-D-glucosaminyl derivative + GDP-beta-L-fucose = an alpha-L-Fuc-(1-&gt;2)-beta-D-Gal-(1-&gt;3)-beta-D-GlcNAc derivative + GDP + H(+). It carries out the reaction a beta-D-galactosyl-(1-&gt;4)-N-acetyl-beta-D-glucosaminyl derivative + GDP-beta-L-fucose = an alpha-L-Fuc-(1-&gt;2)-beta-D-Gal-(1-&gt;4)-beta-D-GlcNAc derivative + GDP + H(+). The catalysed reaction is a neolactoside nLc4Cer + GDP-beta-L-fucose = a neolactoside IV(2)-alpha-Fuc-nLc4Cer + GDP + H(+). The enzyme catalyses a neolactoside nLc4Cer(d18:1(4E)) + GDP-beta-L-fucose = a neolactoside IV(2)-alpha-Fuc-nLc4Cer(d18:1(4E)) + GDP + H(+). It catalyses the reaction a ganglioside GM1 + GDP-beta-L-fucose = a ganglioside Fuc-GM1 + GDP + H(+). It carries out the reaction a ganglioside GA1 + GDP-beta-L-fucose = a ganglioside Fuc-GA1 + GDP + H(+). The catalysed reaction is Lc4Cer + GDP-beta-L-fucose = alpha-L-fucosyl-(1-&gt;2)-beta-D-galactosyl-(1-&gt;3)-N-acetyl-beta-D-glucosaminyl-(1-&gt;3)-beta-D-galactosyl-(1-&gt;4)-beta-D-glucosyl-(1&lt;-&gt;1')-ceramide + GDP + H(+). The enzyme catalyses a beta-D-Gal-(1-&gt;3)-beta-D-GlcNAc-(1-&gt;3)-beta-D-Gal-(1-&gt;4)-beta-D-Glc-(1&lt;-&gt;1')-Cer(d18:1(4E)) + GDP-beta-L-fucose = alpha-L-fucosyl-(1-&gt;2)- beta-D-galactosyl-(1-&gt;3)-N-acetyl-beta-D-glucosaminyl-(1-&gt;3)-beta-D-galactosyl-(1-&gt;4)-beta-D-glucosyl-(1&lt;-&gt;1')-N-acylsphing-4-enine + GDP + H(+). It catalyses the reaction a ganglioside GD1b + GDP-beta-L-fucose = a ganglioside Fuc-GD1b + GDP + H(+). It carries out the reaction a ganglioside GM1 (d18:1(4E)) + GDP-beta-L-fucose = a ganglioside Fuc-GM1 (d18:1(4E)) + GDP + H(+). The catalysed reaction is a globoside GalGb4Cer (d18:1(4E)) + GDP-beta-L-fucose = a globoside Globo-H (d18:1(4E)) + GDP + H(+). The enzyme catalyses a lactoside III(4)-a-Fuc-Lc4Cer + GDP-beta-L-fucose = a lactoside IV(2),III(4)-a-[Fuc]2-Lc4Cer + GDP + H(+). It catalyses the reaction beta-D-galactosyl-(1-&gt;3)-N-acetyl-D-galactosamine + GDP-beta-L-fucose = alpha-L-fucosyl-(1-&gt;2)-beta-D-galactosyl-(1-&gt;3)-N-acetyl-D-galactosamine + GDP + H(+). The protein operates within protein modification; protein glycosylation. Catalyzes the transfer of L-fucose, from a guanosine diphosphate-beta-L-fucose, to the terminal galactose on both O- and N-linked glycans chains of cell surface glycoproteins and glycolipids and the resulting epitope regulates several processes such as cell-cell interaction including host-microbe interaction, cell surface expression and cell proliferation. Preferentially fucosylates gangliosides GA1 and GM1 in the antrum, cecum and colon and in the female reproductive organs. Fucosylated host glycoproteins or glycolipids mediate interaction with intestinal microbiota influencing its composition. Creates a soluble precursor oligosaccharide FuC-alpha ((1,2)Galbeta-) called the H antigen which is an essential substrate for the final step in the soluble ABO blood group antigen synthesis pathway. This Pongo pygmaeus (Bornean orangutan) protein is Galactoside alpha-(1,2)-fucosyltransferase 2.